The sequence spans 105 residues: Large ribosomal subunit protein bL21 (105 aa).

Belongs to the bacterial ribosomal protein bL21 family. As to quaternary structure, part of the 50S ribosomal subunit. Contacts protein L20.

Its function is as follows. This protein binds to 23S rRNA in the presence of protein L20. The polypeptide is Large ribosomal subunit protein bL21 (Parabacteroides distasonis (strain ATCC 8503 / DSM 20701 / CIP 104284 / JCM 5825 / NCTC 11152)).